The primary structure comprises 283 residues: Isochorismatase domain-containing protein 1 (283 aa).

The protein belongs to the isochorismatase family.

The protein is Isochorismatase domain-containing protein 1 (isoc1) of Danio rerio (Zebrafish).